We begin with the raw amino-acid sequence, 207 residues long: Large ribosomal subunit protein uL4 (207 aa).

The disordered stretch occupies residues 48–75 (THAVKNRSAVSGGGRKPWKQKGTGRARA).

This sequence belongs to the universal ribosomal protein uL4 family. Part of the 50S ribosomal subunit.

Its function is as follows. One of the primary rRNA binding proteins, this protein initially binds near the 5'-end of the 23S rRNA. It is important during the early stages of 50S assembly. It makes multiple contacts with different domains of the 23S rRNA in the assembled 50S subunit and ribosome. In terms of biological role, forms part of the polypeptide exit tunnel. This chain is Large ribosomal subunit protein uL4, found in Leuconostoc citreum (strain KM20).